Reading from the N-terminus, the 36-residue chain is Lambda-hexatoxin-Hv1a (36 aa).

4 cysteine pairs are disulfide-bonded: C3-C17, C10-C22, C13-C14, and C16-C33.

Belongs to the neurotoxin 11 (kappa toxin) family. In terms of tissue distribution, expressed by the venom gland.

It localises to the secreted. Its function is as follows. This excitatory toxin inhibits insect calcium-activated potassium (KCa) channels (Slo-type). The protein is Lambda-hexatoxin-Hv1a of Hadronyche versuta (Blue mountains funnel-web spider).